Consider the following 307-residue polypeptide: Type 2A encapsulin shell protein (307 aa).

It belongs to the encapsulin family. Family 2A subfamily. The encapsulin nanocompartment is formed by 60 subunits; monomers form pentamers which assemble to form shells. There are 12 charged pores where the pentamers meet as well as 3-fold axis channels and dimer channels. Isolated from bacteria in a complex with cysteine desulfurase (AC Q9KII6).

It localises to the encapsulin nanocompartment. Its subcellular location is the cell membrane. Shell component of a type 2A encapsulin nanocompartment. Forms encapsulin nanocompartments about 24 nm in diameter from 60 monomers, probably involved in sulfur metabolism. Probably encapsulates cysteine desulfurase. The polypeptide is Type 2A encapsulin shell protein (Mycolicibacterium paratuberculosis (strain ATCC BAA-968 / K-10) (Mycobacterium paratuberculosis)).